The primary structure comprises 176 residues: HTH-type transcriptional regulator DctR (176 aa).

Positions 109–174 (VPEAAVSLSR…ELVRHQHIDY (66 aa)) constitute an HTH luxR-type domain. Positions 133-152 (TEDILEKLKISLKTFYCHKH) form a DNA-binding region, H-T-H motif.

May act as a transcriptional regulator of dctA. In Escherichia coli (strain K12), this protein is HTH-type transcriptional regulator DctR (dctR).